A 198-amino-acid chain; its full sequence is UPF0314 protein Saro_1818 (198 aa).

5 helical membrane passes run 13–33 (GGSL…LGMG), 62–82 (WYSF…HIVW), 96–116 (LALA…PIII), 153–173 (APVL…LWAI), and 177–197 (LALN…WQGG).

This sequence belongs to the UPF0314 family.

The protein resides in the cell membrane. This Novosphingobium aromaticivorans (strain ATCC 700278 / DSM 12444 / CCUG 56034 / CIP 105152 / NBRC 16084 / F199) protein is UPF0314 protein Saro_1818.